We begin with the raw amino-acid sequence, 188 residues long: U1 small nuclear ribonucleoprotein C-2 (188 aa).

The segment at 4–36 adopts a Matrin-type zinc-finger fold; that stretch reads YYCDYCDVFLVSESPSVRKAHNSGRNHLTNVRD. A disordered region spans residues 57–188; the sequence is FETGGGNSTS…MNPDRARQLG (132 aa). The span at 72–82 shows a compositional bias: pro residues; sequence GNPPGSQPGPP. Over residues 109-124 the composition is skewed to low complexity; it reads AMLALMNGQNGMSSPG. The segment covering 125 to 141 has biased composition (pro residues); sequence SGPPPMRFAGPPIPNNM.

The protein belongs to the U1 small nuclear ribonucleoprotein C family. As to quaternary structure, U1 snRNP is composed of the 7 core Sm proteins B/B', D1, D2, D3, E, F and G that assemble in a heptameric protein ring on the Sm site of the small nuclear RNA to form the core snRNP, and at least 3 U1 snRNP-specific proteins U1-70K, U1-A and U1-C. U1-C interacts with U1 snRNA and the 5' splice-site region of the pre-mRNA.

It localises to the nucleus. Functionally, component of the spliceosomal U1 snRNP, which is essential for recognition of the pre-mRNA 5' splice-site and the subsequent assembly of the spliceosome. U1-C is directly involved in initial 5' splice-site recognition for both constitutive and regulated alternative splicing. The interaction with the 5' splice-site seems to precede base-pairing between the pre-mRNA and the U1 snRNA. Stimulates commitment or early (E) complex formation by stabilizing the base pairing of the 5' end of the U1 snRNA and the 5' splice-site region. The sequence is that of U1 small nuclear ribonucleoprotein C-2 from Puccinia graminis f. sp. tritici (strain CRL 75-36-700-3 / race SCCL) (Black stem rust fungus).